A 355-amino-acid polypeptide reads, in one-letter code: BAG family molecular chaperone regulator 1 (355 aa).

The interval 1–112 (MAGRSAARRP…KNVTGTQVEE (112 aa)) is disordered. Basic and acidic residues predominate over residues 26 to 39 (PAREPRQSESRAER). Polar residues-rich tracts occupy residues 80–91 (SSQSEKVGSSSR) and 102–111 (SKNVTGTQVE). A run of 7 repeats spans residues 103–108 (KNVTGT), 111–116 (EEVTKI), 117–122 (EEATQT), 123–128 (EEVTVA), 129–134 (EEVTQT), 141–146 (EEMVQT), and 147–152 (EEMETP). Residues 111–209 (EEVTKIEEAT…LIFKGKSLKE (99 aa)) are 7 X 6 AA tandem repeat of E-E-X(4). Residues 132-151 (TQTDNMAKTEEMVQTEEMET) are disordered. The 81-residue stretch at 154–234 (LSVIVTHSNE…VMLIGEKSNP (81 aa)) folds into the Ubiquitin-like domain. The interaction with HSPA8 stretch occupies residues 182–229 (DLAQLVEEATGVPLPFQKLIFKGKSLKEMETPLSALGMQNGCRVMLIG). Residues 226-355 (MLIGEKSNPE…LQSTNLALAE (130 aa)) are interaction with PPP1R15A. One can recognise a BAG domain in the interval 256 to 336 (HLQELNKELS…VFLAECDTVE (81 aa)).

Homodimer. Forms a heteromeric complex with HSP70/HSC70. Binds to the ATPase domain of HSP/HSC70 chaperones. Interacts with NR3C1. Interacts with the N-terminal region of MAPRE2. Interacts with PPP1R15A. Interacts with BCL2 in an ATP-dependent manner. Interacts with SIAH1, HSPA8 (via NBD), HSPA1A (via NBD) and HSPA1B (via NBD). Interacts with SIAH2. Interacts with ESR1; the interaction is promoted in the absence of estradiol (17-beta-estradiol/E2). Ubiquitinated; mediated by SIAH1 or SIAH2 and leading to its subsequent proteasomal degradation. In terms of tissue distribution, isoform 2 is expressed in the heart, lung, kidney and spinal cord. Isoform 1 and isoform 2 are expressed in hematopoietic cell lines. The levels of isoform 2 are relatively constant in all the cell lines examined while the levels of isoform 1 are more variable (at protein level). Isoform 1 is expressed in the lung and kidney. Isoform 2 is expressed in various tissues, with highest levels in testis and stomach.

The protein localises to the nucleus. The protein resides in the cytoplasm. Its function is as follows. Co-chaperone for HSP70 and HSC70 chaperone proteins. Acts as a nucleotide-exchange factor (NEF) promoting the release of ADP from the HSP70 and HSC70 proteins thereby triggering client/substrate protein release. Nucleotide release is mediated via its binding to the nucleotide-binding domain (NBD) of HSPA8/HSC70 where as the substrate release is mediated via its binding to the substrate-binding domain (SBD) of HSPA8/HSC70. Inhibits the pro-apoptotic function of PPP1R15A, and has anti-apoptotic activity. Markedly increases the anti-cell death function of BCL2 induced by various stimuli. Involved in the STUB1-mediated proteasomal degradation of ESR1 in response to age-related circulating estradiol (17-beta-estradiol/E2) decline, thereby promotes neuronal apoptosis in response to ischemic reperfusion injury. The polypeptide is BAG family molecular chaperone regulator 1 (Bag1) (Mus musculus (Mouse)).